A 121-amino-acid polypeptide reads, in one-letter code: Glycine cleavage system H protein (121 aa).

The 83-residue stretch at Val-16–Lys-98 folds into the Lipoyl-binding domain. N6-lipoyllysine is present on Lys-57.

Belongs to the GcvH family. The glycine cleavage system is composed of four proteins: P, T, L and H. (R)-lipoate is required as a cofactor.

The glycine cleavage system catalyzes the degradation of glycine. The H protein shuttles the methylamine group of glycine from the P protein to the T protein. The polypeptide is Glycine cleavage system H protein (Caulobacter vibrioides (strain NA1000 / CB15N) (Caulobacter crescentus)).